The chain runs to 185 residues: Photosystem I assembly protein Ycf4 (185 aa).

2 consecutive transmembrane segments (helical) span residues 24 to 44 and 66 to 86; these read YIIGGMLTIGGIGFLLASISS and IIMGAYGVIANLLNFYLWYLV.

This sequence belongs to the Ycf4 family.

It localises to the cellular thylakoid membrane. Its function is as follows. Seems to be required for the assembly of the photosystem I complex. The protein is Photosystem I assembly protein Ycf4 of Prochlorococcus marinus (strain AS9601).